Here is a 177-residue protein sequence, read N- to C-terminus: MADFTTIARPYAKAAFDFAVEKGQLDQWGQMLSFAAEVAQNEQISELLSGSMSADKLAELFIAICGEQVDEFGQNLLKVMAENGRLAALPDVCTLFFVLKKEHEKEIDVEVISATELSDEQCANISQKLEQRLERKVKLNCSVDEALLGGVIIRAGDLVIDNSARGRLNRLSDALQS.

This sequence belongs to the ATPase delta chain family. As to quaternary structure, F-type ATPases have 2 components, F(1) - the catalytic core - and F(0) - the membrane proton channel. F(1) has five subunits: alpha(3), beta(3), gamma(1), delta(1), epsilon(1). F(0) has three main subunits: a(1), b(2) and c(10-14). The alpha and beta chains form an alternating ring which encloses part of the gamma chain. F(1) is attached to F(0) by a central stalk formed by the gamma and epsilon chains, while a peripheral stalk is formed by the delta and b chains.

Its subcellular location is the cell inner membrane. Its function is as follows. F(1)F(0) ATP synthase produces ATP from ADP in the presence of a proton or sodium gradient. F-type ATPases consist of two structural domains, F(1) containing the extramembraneous catalytic core and F(0) containing the membrane proton channel, linked together by a central stalk and a peripheral stalk. During catalysis, ATP synthesis in the catalytic domain of F(1) is coupled via a rotary mechanism of the central stalk subunits to proton translocation. In terms of biological role, this protein is part of the stalk that links CF(0) to CF(1). It either transmits conformational changes from CF(0) to CF(1) or is implicated in proton conduction. In Vibrio vulnificus (strain CMCP6), this protein is ATP synthase subunit delta.